The primary structure comprises 203 residues: Endo-type membrane-bound lytic murein transglycosylase A (203 aa).

Positions 1–15 are cleaved as a signal peptide; the sequence is MKLRWFAFLIVLLAG. Residue Cys-16 is the site of N-palmitoyl cysteine attachment. A lipid anchor (S-diacylglycerol cysteine) is attached at Cys-16.

It belongs to the transglycosylase Slt family.

Its subcellular location is the cell outer membrane. The catalysed reaction is Endolytic cleavage of the (1-&gt;4)-beta-glycosidic linkage between N-acetylmuramic acid (MurNAc) and N-acetylglucosamine (GlcNAc) residues in peptidoglycan with concomitant formation of a 1,6-anhydrobond in the MurNAc residue.. In terms of biological role, murein-degrading enzyme. May play a role in recycling of muropeptides during cell elongation and/or cell division. Preferentially cleaves at a distance of more than two disaccharide units from the ends of the glycan chain. This is Endo-type membrane-bound lytic murein transglycosylase A from Escherichia coli O127:H6 (strain E2348/69 / EPEC).